We begin with the raw amino-acid sequence, 412 residues long: UDP-galactose transporter homolog 1 (412 aa).

A helical membrane pass occupies residues 3–23; it reads VLRLAVCISGVYAAFLLWAIA. The interval 31 to 51 is disordered; it reads FPSVHPHPHQQPHSPSDPPPG. 4 helical membrane passes run 58–78, 139–159, 197–217, and 222–242; these read LFLN…YLSF, LLAL…IGFL, YIVV…AETS, and GGSD…IDGL. N-linked (GlcNAc...) asparagine glycosylation is present at asparagine 244. Helical transmembrane passes span 262–282, 325–345, 355–375, and 379–399; these read MMFT…VLPL, SALA…LFIF, TLVM…VVVF, and LTKG…VEAG.

The protein belongs to the nucleotide-sugar transporter family. SLC35B subfamily.

The protein localises to the endoplasmic reticulum membrane. Its function is as follows. May be involved in specific transport of UDP-Gal from the cytosol to the Golgi lumen. Involved in the maintenance of optimal conditions for the folding of secretory pathway proteins in the endoplasmic reticulum. This chain is UDP-galactose transporter homolog 1 (HUT1-A), found in Cryptococcus neoformans var. neoformans serotype D (strain JEC21 / ATCC MYA-565) (Filobasidiella neoformans).